A 291-amino-acid polypeptide reads, in one-letter code: Verruculogen synthase (291 aa).

Tyr68 is an active-site residue.

It belongs to the PhyH family. In terms of assembly, homodimer. The cofactor is Fe cation.

It carries out the reaction fumitremorgin B + 2-oxoglutarate + AH2 + 2 O2 = verruculogen + succinate + A + CO2 + H2O. It participates in mycotoxin biosynthesis. Its function is as follows. Verruculogen synthase; part of the gene cluster that mediates the biosynthesis of fumitremorgins, indole alkaloids that carry not only intriguing chemical structures, but also interesting biological and pharmacological activities. The biosynthesis of fumitremorgin-type alkaloids begins by condensation of the two amino acids L-tryptophan and L-proline to brevianamide F, catalyzed by the non-ribosomal peptide synthetase ftmA. Brevianamide F is then prenylated by the prenyltransferase ftmPT1/ftmB in the presence of dimethylallyl diphosphate, resulting in the formation of tryprostatin B. The three cytochrome P450 monooxygenases, ftmP450-1/ftmC, ftmP450-2/ftmE and ftmP450-3/FtmG, are responsible for the conversion of tryprostatin B to 6-hydroxytryprostatin B, tryprostatin A to fumitremorgin C and fumitremorgin C to 12,13-dihydroxyfumitremorgin C, respectively. The putative methyltransferase ftmMT/ftmD is expected for the conversion of 6-hydroxytryprostatin B to tryprostatin A. FtmPT2/FtmH catalyzes the prenylation of 12,13-dihydroxyfumitre-morgin C in the presence of dimethylallyl diphosphate, resulting in the formation of fumitremorgin B. Fumitremorgin B is further converted to verruculogen by ftmOx1/ftmF via the insertion of an endoperoxide bond between the two prenyl moieties. In some fungal species, verruculogen is further converted to fumitremorgin A, but the enzymes involved in this step have not been identified yet. This Aspergillus fumigatus (strain ATCC MYA-4609 / CBS 101355 / FGSC A1100 / Af293) (Neosartorya fumigata) protein is Verruculogen synthase.